The primary structure comprises 509 residues: ATP synthase subunit alpha (509 aa).

169–176 (GDRQTGKT) contacts ATP.

Belongs to the ATPase alpha/beta chains family. F-type ATPases have 2 components, CF(1) - the catalytic core - and CF(0) - the membrane proton channel. CF(1) has five subunits: alpha(3), beta(3), gamma(1), delta(1), epsilon(1). CF(0) has three main subunits: a(1), b(2) and c(9-12). The alpha and beta chains form an alternating ring which encloses part of the gamma chain. CF(1) is attached to CF(0) by a central stalk formed by the gamma and epsilon chains, while a peripheral stalk is formed by the delta and b chains.

The protein localises to the cell inner membrane. The enzyme catalyses ATP + H2O + 4 H(+)(in) = ADP + phosphate + 5 H(+)(out). Produces ATP from ADP in the presence of a proton gradient across the membrane. The alpha chain is a regulatory subunit. The chain is ATP synthase subunit alpha from Methylocella silvestris (strain DSM 15510 / CIP 108128 / LMG 27833 / NCIMB 13906 / BL2).